The sequence spans 485 residues: Glutamyl-tRNA(Gln) amidotransferase subunit A (485 aa).

Residues lysine 76 and serine 152 each act as charge relay system in the active site. Serine 176 functions as the Acyl-ester intermediate in the catalytic mechanism.

This sequence belongs to the amidase family. GatA subfamily. As to quaternary structure, heterotrimer of A, B and C subunits.

It carries out the reaction L-glutamyl-tRNA(Gln) + L-glutamine + ATP + H2O = L-glutaminyl-tRNA(Gln) + L-glutamate + ADP + phosphate + H(+). In terms of biological role, allows the formation of correctly charged Gln-tRNA(Gln) through the transamidation of misacylated Glu-tRNA(Gln) in organisms which lack glutaminyl-tRNA synthetase. The reaction takes place in the presence of glutamine and ATP through an activated gamma-phospho-Glu-tRNA(Gln). In Dechloromonas aromatica (strain RCB), this protein is Glutamyl-tRNA(Gln) amidotransferase subunit A.